The chain runs to 500 residues: Glycerol kinase (500 aa).

Residue T13 coordinates ADP. Residues T13, T14, and S15 each coordinate ATP. T13 serves as a coordination point for sn-glycerol 3-phosphate. R17 lines the ADP pocket. Residues R83, E84, Y135, and D244 each contribute to the sn-glycerol 3-phosphate site. The glycerol site is built by R83, E84, Y135, D244, and Q245. 2 residues coordinate ADP: T266 and G309. Positions 266, 309, 313, and 410 each coordinate ATP. G410 and N414 together coordinate ADP.

It belongs to the FGGY kinase family.

It carries out the reaction glycerol + ATP = sn-glycerol 3-phosphate + ADP + H(+). It participates in polyol metabolism; glycerol degradation via glycerol kinase pathway; sn-glycerol 3-phosphate from glycerol: step 1/1. With respect to regulation, inhibited by fructose 1,6-bisphosphate (FBP). Functionally, key enzyme in the regulation of glycerol uptake and metabolism. Catalyzes the phosphorylation of glycerol to yield sn-glycerol 3-phosphate. The sequence is that of Glycerol kinase from Burkholderia ambifaria (strain ATCC BAA-244 / DSM 16087 / CCUG 44356 / LMG 19182 / AMMD) (Burkholderia cepacia (strain AMMD)).